The sequence spans 472 residues: Adenosylhomocysteinase (472 aa).

Substrate is bound by residues T61, D136, and E196. 197-199 lines the NAD(+) pocket; sequence TTT. Residues K226 and D230 each contribute to the substrate site. Residues N231, 260-265, E283, N318, 339-341, and N384 each bind NAD(+); these read GYGDVG and IGH.

Belongs to the adenosylhomocysteinase family. Requires NAD(+) as cofactor.

Its subcellular location is the cytoplasm. It carries out the reaction S-adenosyl-L-homocysteine + H2O = L-homocysteine + adenosine. The protein operates within amino-acid biosynthesis; L-homocysteine biosynthesis; L-homocysteine from S-adenosyl-L-homocysteine: step 1/1. May play a key role in the regulation of the intracellular concentration of adenosylhomocysteine. The protein is Adenosylhomocysteinase of Cupriavidus necator (strain ATCC 17699 / DSM 428 / KCTC 22496 / NCIMB 10442 / H16 / Stanier 337) (Ralstonia eutropha).